Consider the following 150-residue polypeptide: Flagellar assembly factor FliW (150 aa).

Belongs to the FliW family. As to quaternary structure, interacts with translational regulator CsrA and flagellin(s).

The protein resides in the cytoplasm. Its function is as follows. Acts as an anti-CsrA protein, binds CsrA and prevents it from repressing translation of its target genes, one of which is flagellin. Binds to flagellin and participates in the assembly of the flagellum. The protein is Flagellar assembly factor FliW of Thermoanaerobacter pseudethanolicus (strain ATCC 33223 / 39E) (Clostridium thermohydrosulfuricum).